We begin with the raw amino-acid sequence, 347 residues long: D-alanine--D-alanine ligase (347 aa).

The ATP-grasp domain maps to 134–332 (KLYAKDLGVK…LAQSLPKTPK (199 aa)). Position 161 to 216 (161 to 216 (LMNFNFPFIIKPNNAGSSLGVNVVKEEKELVYALDGAFEYSKEVLIEPFIQGVKEY)) interacts with ATP. Mg(2+) is bound by residues Asp-288, Glu-300, and Asn-302.

Belongs to the D-alanine--D-alanine ligase family. Mg(2+) serves as cofactor. The cofactor is Mn(2+).

Its subcellular location is the cytoplasm. The enzyme catalyses 2 D-alanine + ATP = D-alanyl-D-alanine + ADP + phosphate + H(+). It functions in the pathway cell wall biogenesis; peptidoglycan biosynthesis. In terms of biological role, cell wall formation. In Helicobacter pylori (strain ATCC 700392 / 26695) (Campylobacter pylori), this protein is D-alanine--D-alanine ligase.